Reading from the N-terminus, the 277-residue chain is Glycerol-3-phosphate acyltransferase (277 aa).

Transmembrane regions (helical) follow at residues 3 to 23, 55 to 75, 79 to 99, 111 to 131, and 155 to 175; these read FFIF…AIIV, IMVM…AKLL, PVTV…PVFF, IGAL…TWLL, and LILV…ILVL. A disordered region spans residues 231–277; it reads KTEQAEAVKKPKAKKATTKAKKTTSKEETAKKPKSTKPKTKTVKEKE. 2 stretches are compositionally biased toward basic residues: residues 240–253 and 262–271; these read KPKA…AKKT and KPKSTKPKTK.

This sequence belongs to the PlsY family. As to quaternary structure, probably interacts with PlsX.

It is found in the cell inner membrane. The catalysed reaction is an acyl phosphate + sn-glycerol 3-phosphate = a 1-acyl-sn-glycero-3-phosphate + phosphate. It functions in the pathway lipid metabolism; phospholipid metabolism. Its function is as follows. Catalyzes the transfer of an acyl group from acyl-phosphate (acyl-PO(4)) to glycerol-3-phosphate (G3P) to form lysophosphatidic acid (LPA). This enzyme utilizes acyl-phosphate as fatty acyl donor, but not acyl-CoA or acyl-ACP. The polypeptide is Glycerol-3-phosphate acyltransferase (Legionella pneumophila (strain Lens)).